The sequence spans 374 residues: Isopentenyl-diphosphate delta-isomerase (374 aa).

Substrate is bound at residue 13–14; that stretch reads RK. Residues 71-73, Ser-104, and Asn-132 each bind FMN; that span reads GMT. 104–106 provides a ligand contact to substrate; the sequence is SQR. Gln-171 is a substrate binding site. Glu-172 contributes to the Mg(2+) binding site. FMN contacts are provided by residues Lys-203, Thr-233, 282–284, and 303–304; these read GMR and AL.

It belongs to the IPP isomerase type 2 family. In terms of assembly, homooctamer. Dimer of tetramers. It depends on FMN as a cofactor. Requires NADPH as cofactor. The cofactor is Mg(2+).

The protein localises to the cytoplasm. It carries out the reaction isopentenyl diphosphate = dimethylallyl diphosphate. Involved in the biosynthesis of isoprenoids. Catalyzes the 1,3-allylic rearrangement of the homoallylic substrate isopentenyl (IPP) to its allylic isomer, dimethylallyl diphosphate (DMAPP). The chain is Isopentenyl-diphosphate delta-isomerase from Thermococcus onnurineus (strain NA1).